Here is a 149-residue protein sequence, read N- to C-terminus: Cytochrome c-type biogenesis protein CcmE (149 aa).

Topologically, residues 1–7 (MKPRHKK) are cytoplasmic. The chain crosses the membrane as a helical; Signal-anchor for type II membrane protein span at residues 8–28 (MAVIALSVSALTVAVVLVLNA). Topologically, residues 29-149 (FQSNLVFFFS…AKAQKTSLAQ (121 aa)) are periplasmic. Residues His123 and Tyr127 each contribute to the heme site.

This sequence belongs to the CcmE/CycJ family.

The protein resides in the cell inner membrane. Heme chaperone required for the biogenesis of c-type cytochromes. Transiently binds heme delivered by CcmC and transfers the heme to apo-cytochromes in a process facilitated by CcmF and CcmH. This Nitrosomonas europaea (strain ATCC 19718 / CIP 103999 / KCTC 2705 / NBRC 14298) protein is Cytochrome c-type biogenesis protein CcmE.